A 284-amino-acid polypeptide reads, in one-letter code: Pantothenate synthetase (284 aa).

30–37 (MGNLHDGH) provides a ligand contact to ATP. Histidine 37 serves as the catalytic Proton donor. Position 61 (glutamine 61) interacts with (R)-pantoate. Glutamine 61 is a binding site for beta-alanine. Position 149–152 (149–152 (GEKD)) interacts with ATP. Glutamine 155 contributes to the (R)-pantoate binding site. Residues valine 178 and 186 to 189 (LSSR) contribute to the ATP site.

Belongs to the pantothenate synthetase family. In terms of assembly, homodimer.

It localises to the cytoplasm. It catalyses the reaction (R)-pantoate + beta-alanine + ATP = (R)-pantothenate + AMP + diphosphate + H(+). It functions in the pathway cofactor biosynthesis; (R)-pantothenate biosynthesis; (R)-pantothenate from (R)-pantoate and beta-alanine: step 1/1. Functionally, catalyzes the condensation of pantoate with beta-alanine in an ATP-dependent reaction via a pantoyl-adenylate intermediate. In Erwinia tasmaniensis (strain DSM 17950 / CFBP 7177 / CIP 109463 / NCPPB 4357 / Et1/99), this protein is Pantothenate synthetase.